We begin with the raw amino-acid sequence, 548 residues long: Chaperonin GroEL (548 aa).

Residues 30–33 (TLGP), Lys51, 87–91 (DGTTT), Gly415, 479–481 (NAA), and Asp495 contribute to the ATP site.

It belongs to the chaperonin (HSP60) family. In terms of assembly, forms a cylinder of 14 subunits composed of two heptameric rings stacked back-to-back. Interacts with the co-chaperonin GroES.

Its subcellular location is the cytoplasm. The catalysed reaction is ATP + H2O + a folded polypeptide = ADP + phosphate + an unfolded polypeptide.. Functionally, together with its co-chaperonin GroES, plays an essential role in assisting protein folding. The GroEL-GroES system forms a nano-cage that allows encapsulation of the non-native substrate proteins and provides a physical environment optimized to promote and accelerate protein folding. This Methylibium petroleiphilum (strain ATCC BAA-1232 / LMG 22953 / PM1) protein is Chaperonin GroEL.